Reading from the N-terminus, the 156-residue chain is Movement protein P17 (156 aa).

Residues 38 to 54 form a homodimerization region; it reads AEDAEEEAIAAQEELEF. Disordered stretches follow at residues 55–80 and 131–156; these read PEDE…EVSP and AKYH…IKRG. Residues 57-156 form an RNA-binding region; that stretch reads DEAQARHSCL…RAAPKLIKRG (100 aa). 4 positions are modified to phosphoserine: Ser71, Ser79, Ser137, and Ser140. Basic residues predominate over residues 144–156; it reads KLRRAAPKLIKRG.

This sequence belongs to the polerovirus movement protein family. Homodimer. Heterodimer with movement protein P3a. Post-translationally, expressed as a nonphosphorylated 20kDa form and a phosphorylated 22kDa form. Phosphorylated by a host PKC-related kinase. Serine phosphorylation is required for plamodesma targeting.

It is found in the host cell junction. Its subcellular location is the host plasmodesma. The protein resides in the host mitochondrion outer membrane. It localises to the host Golgi apparatus. The protein localises to the host chloroplast envelope. Its function is as follows. Together with movement protein P3a, facilitates long-distance movement of virions in host. Transports viral genome to neighboring plant cells directly through plasmosdesmata, without any budding. The movement protein allows efficient cell to cell propagation, by bypassing the host cell wall barrier. Binds ssRNA. This chain is Movement protein P17, found in Solanum tuberosum (Potato).